A 34-amino-acid polypeptide reads, in one-letter code: Photosystem II reaction center protein M (34 aa).

The helical transmembrane segment at 7–27 (GFVASLMFILVPAIFLIVLYI) threads the bilayer.

This sequence belongs to the PsbM family. PSII is composed of 1 copy each of membrane proteins PsbA, PsbB, PsbC, PsbD, PsbE, PsbF, PsbH, PsbI, PsbJ, PsbK, PsbL, PsbM, PsbT, PsbX, PsbY, PsbZ, Psb30/Ycf12, peripheral proteins PsbO, CyanoQ (PsbQ), PsbU, PsbV and a large number of cofactors. It forms dimeric complexes.

It localises to the cellular thylakoid membrane. Functionally, one of the components of the core complex of photosystem II (PSII). PSII is a light-driven water:plastoquinone oxidoreductase that uses light energy to abstract electrons from H(2)O, generating O(2) and a proton gradient subsequently used for ATP formation. It consists of a core antenna complex that captures photons, and an electron transfer chain that converts photonic excitation into a charge separation. This subunit is found at the monomer-monomer interface. This chain is Photosystem II reaction center protein M, found in Synechococcus sp. (strain CC9902).